The primary structure comprises 445 residues: Mitochondrial-processing peptidase subunit alpha-2 (445 aa).

The transit peptide at 1 to 13 (MIGRFIARNYTTS) directs the protein to the mitochondrion.

Belongs to the peptidase M16 family. Heterodimer of alpha and beta subunits, forming the mitochondrial processing protease (MPP) in which subunit alpha is involved in substrate recognition and binding and subunit beta is the catalytic subunit.

It is found in the mitochondrion matrix. Its function is as follows. Substrate recognition and binding subunit of the essential mitochondrial processing protease (MPP), which cleaves the mitochondrial sequence off newly imported precursors proteins. The sequence is that of Mitochondrial-processing peptidase subunit alpha-2 (mppA2) from Dictyostelium discoideum (Social amoeba).